The sequence spans 110 residues: Neural hemoglobin (110 aa).

Residues 2-110 (VNWAAVVDDF…HAIDDILSHL (109 aa)) form the Globin domain. His-70 contacts heme.

It belongs to the globin family. In terms of assembly, homotetramer. Self-associates in the deoxy state. Seems to dissociate upon oxygenation.

Its function is as follows. Acts as an oxygen store capable of sustaining neuronal activity in an anoxic environment for 5 to 30 minutes. The protein is Neural hemoglobin of Cerebratulus lacteus (Milky ribbon worm).